We begin with the raw amino-acid sequence, 190 residues long: Probable RNA-binding protein 18 (190 aa).

The 82-residue stretch at 25–106 (HRLWIGNLDP…KKLVVRWAHA (82 aa)) folds into the RRM domain. Residues 166-190 (VYSYFKPPDKKRTTPYSRTAWKSRR) are disordered.

The chain is Probable RNA-binding protein 18 (Rbm18) from Mus musculus (Mouse).